Here is a 469-residue protein sequence, read N- to C-terminus: Glutamate--tRNA ligase (469 aa).

The 'HIGH' region signature appears at 11 to 21; that stretch reads PSPTGFIHLGN. Positions 243-247 match the 'KMSKS' region motif; the sequence is KMSKR. K246 serves as a coordination point for ATP.

This sequence belongs to the class-I aminoacyl-tRNA synthetase family. Glutamate--tRNA ligase type 1 subfamily. Monomer.

It localises to the cytoplasm. The enzyme catalyses tRNA(Glu) + L-glutamate + ATP = L-glutamyl-tRNA(Glu) + AMP + diphosphate. Functionally, catalyzes the attachment of glutamate to tRNA(Glu) in a two-step reaction: glutamate is first activated by ATP to form Glu-AMP and then transferred to the acceptor end of tRNA(Glu). This Burkholderia ambifaria (strain MC40-6) protein is Glutamate--tRNA ligase.